A 159-amino-acid chain; its full sequence is Succinate dehydrogenase [ubiquinone] cytochrome b small subunit, mitochondrial (159 aa).

The transit peptide at 1 to 56 (MAVLLKLGVLCSGQGARALLLRSRVVRPAYVSAFLQDQPTQGRCGTQHIHLSPSHH) directs the protein to the mitochondrion. The Mitochondrial matrix segment spans residues 57-63 (SGSKAAS). The chain crosses the membrane as a helical span at residues 64 to 85 (LHWTSERVVSVLLLGLIPAGYL). Residues 86–90 (NPCSV) are Mitochondrial intermembrane-facing. The chain crosses the membrane as a helical span at residues 91–111 (VDYSLAAALTLHSHWGLGQVV). His-102 is a heme b binding site. Residues 112 to 120 (TDYVHGDTL) lie on the Mitochondrial matrix side of the membrane. Position 114 (Tyr-114) interacts with a ubiquinone. The chain crosses the membrane as a helical span at residues 121–142 (PKAARAGLLALSALTFAGLCYF). Over 143–159 (NYHDVGICRAVAMLWKL) the chain is Mitochondrial intermembrane.

It belongs to the CybS family. Component of complex II composed of four subunits: the flavoprotein (FP) SDHA, iron-sulfur protein (IP) SDHB, and a cytochrome b560 composed of SDHC and SDHD.

The protein localises to the mitochondrion inner membrane. It functions in the pathway carbohydrate metabolism; tricarboxylic acid cycle. Functionally, membrane-anchoring subunit of succinate dehydrogenase (SDH) that is involved in complex II of the mitochondrial electron transport chain and is responsible for transferring electrons from succinate to ubiquinone (coenzyme Q). SDH also oxidizes malate to the non-canonical enol form of oxaloacetate, enol-oxaloacetate. Enol-oxaloacetate, which is a potent inhibitor of the succinate dehydrogenase activity, is further isomerized into keto-oxaloacetate. The sequence is that of Succinate dehydrogenase [ubiquinone] cytochrome b small subunit, mitochondrial (Sdhd) from Mus musculus (Mouse).